Here is a 422-residue protein sequence, read N- to C-terminus: Tyrosine--tRNA ligase (422 aa).

Y34 contacts L-tyrosine. The 'HIGH' region motif lies at 39–48; sequence PTEDSLHVGH. L-tyrosine is bound by residues Y172 and Q176. The short motif at 232–236 is the 'KMSKS' region element; that stretch reads KFGKT. An ATP-binding site is contributed by K235. Residues 354-412 enclose the S4 RNA-binding domain; sequence KDLQEALVLSSLAQSRTQAKNMIISNSISINTKKIVNKNYIIDDNDKLFNQFTLLSRGK.

Belongs to the class-I aminoacyl-tRNA synthetase family. TyrS type 1 subfamily. As to quaternary structure, homodimer.

The protein resides in the cytoplasm. The enzyme catalyses tRNA(Tyr) + L-tyrosine + ATP = L-tyrosyl-tRNA(Tyr) + AMP + diphosphate + H(+). In terms of biological role, catalyzes the attachment of tyrosine to tRNA(Tyr) in a two-step reaction: tyrosine is first activated by ATP to form Tyr-AMP and then transferred to the acceptor end of tRNA(Tyr). In Buchnera aphidicola subsp. Schizaphis graminum (strain Sg), this protein is Tyrosine--tRNA ligase.